The primary structure comprises 307 residues: Small ribosomal subunit biogenesis GTPase RsgA (307 aa).

The CP-type G domain maps to 80-237; it reads KADLRQTIVS…IVDTPGIKEF (158 aa). Residues 129 to 132 and 180 to 188 each bind GTP; these read NKID and GQSGVGKSS. Zn(2+) is bound by residues Cys-261, Cys-266, His-268, and Cys-274.

Belongs to the TRAFAC class YlqF/YawG GTPase family. RsgA subfamily. As to quaternary structure, monomer. Associates with 30S ribosomal subunit, binds 16S rRNA. It depends on Zn(2+) as a cofactor.

The protein localises to the cytoplasm. Its function is as follows. One of several proteins that assist in the late maturation steps of the functional core of the 30S ribosomal subunit. Helps release RbfA from mature subunits. May play a role in the assembly of ribosomal proteins into the subunit. Circularly permuted GTPase that catalyzes slow GTP hydrolysis, GTPase activity is stimulated by the 30S ribosomal subunit. This Borreliella afzelii (strain PKo) (Borrelia afzelii) protein is Small ribosomal subunit biogenesis GTPase RsgA.